The primary structure comprises 303 residues: Phytochrome-associated serine/threonine-protein phosphatase 3 (303 aa).

Positions 50, 52, 78, and 110 each coordinate Zn(2+). The active-site Proton donor is the His111. 2 residues coordinate Zn(2+): His160 and His234.

It belongs to the PPP phosphatase family. PP-6 (PP-V) subfamily. In terms of assembly, interacts with PHYA and PHYB, mostly when they are phosphorylated and in Pfr forms. Interacts with TAP46. Interacts with NRP. Interacts with PIN1 and PIN2. Interacts with ABI5. Interacts with PIF3 and PIF4. Protein phosphatase 6 (PP6) holoenzyme is a heterotrimeric complex formed by the catalytic subunit FYPP, a SAPS domain-containing subunit (SAL) and a protein phosphatase 2A regulatory subunit A (PP2AA). Requires Zn(2+) as cofactor. In terms of tissue distribution, mostly expressed in flowers. Also detected to a lower extent in stems and leaves. Expressed in roots.

Its subcellular location is the cytoplasm. The enzyme catalyses O-phospho-L-seryl-[protein] + H2O = L-seryl-[protein] + phosphate. It catalyses the reaction O-phospho-L-threonyl-[protein] + H2O = L-threonyl-[protein] + phosphate. Catalytic subunit of protein phosphatase 6 (PP6). Dephosphorylates phosphorylated phytochromes, with a preference toward Pfr forms. Plays a major role in the photoperiodic control of flowering time in long days by modulating phytochrome signals in flowering time control. Involved in the regulation of polar auxin transport in roots. Dephosphorylates directly the auxin efflux carriers PIN1 and PIN2, thus promoting their proper polar localization in root cell plasma membrane. Acts antagonistically with the protein kinase PID to regulate the reversible phosphorylation of PIN and polar targeting, subsequently impacting polar auxin transport and plant development. Involved in the regulation of abscisic acid (ABA) signaling during seed germination and postgermination seedling growth. Functions as a negative regulator of ABA signaling through direct dephosphorylation and destabilization of ABI5 protein. Acts antagonistically with the protein kinase SRK2E/SNRK2.6 to regulate ABI5 phosphorylation and ABA responses. Involved in the regulation of phosphorylation status in hypocotyl phototropism. Involved in the negative regulation of photomorphogenesis by controlling the stability and transcriptional activity of PIF3 and PIF4 proteins in the dark, via the regulation of their phosphorylation status. This is Phytochrome-associated serine/threonine-protein phosphatase 3 from Arabidopsis thaliana (Mouse-ear cress).